The following is a 350-amino-acid chain: Phosphoribosylformylglycinamidine cyclo-ligase (350 aa).

It belongs to the AIR synthase family.

Its subcellular location is the cytoplasm. The catalysed reaction is 2-formamido-N(1)-(5-O-phospho-beta-D-ribosyl)acetamidine + ATP = 5-amino-1-(5-phospho-beta-D-ribosyl)imidazole + ADP + phosphate + H(+). Its pathway is purine metabolism; IMP biosynthesis via de novo pathway; 5-amino-1-(5-phospho-D-ribosyl)imidazole from N(2)-formyl-N(1)-(5-phospho-D-ribosyl)glycinamide: step 2/2. The chain is Phosphoribosylformylglycinamidine cyclo-ligase from Pseudoalteromonas translucida (strain TAC 125).